The following is a 205-amino-acid chain: Thymidine kinase (205 aa).

ATP is bound by residues 9–16 (SAMNAGKS) and 87–90 (DECQ). Glutamate 88 serves as the catalytic Proton acceptor. Residues cysteine 145, cysteine 147, cysteine 182, and histidine 185 each contribute to the Zn(2+) site.

The protein belongs to the thymidine kinase family. Homotetramer.

The protein localises to the cytoplasm. It catalyses the reaction thymidine + ATP = dTMP + ADP + H(+). Allosteric enzyme which is feedback inhibited by dTTP and activated by a number of dNDP and dNTP. Phosphorylates both thymidine and deoxyuridine. This Escherichia coli O157:H7 protein is Thymidine kinase.